The sequence spans 89 residues: Small ribosomal subunit protein uS19 (89 aa).

The protein belongs to the universal ribosomal protein uS19 family.

Functionally, protein S19 forms a complex with S13 that binds strongly to the 16S ribosomal RNA. This Rhodopirellula baltica (strain DSM 10527 / NCIMB 13988 / SH1) protein is Small ribosomal subunit protein uS19.